The sequence spans 339 residues: RNA polymerase II holoenzyme cyclin-like subunit (339 aa).

The interval 48–67 is disordered; the sequence is PNSADSSNGNAANNGGGNGR. Residues 49-60 show a composition bias toward low complexity; sequence NSADSSNGNAAN. Residues 93–194 enclose the Cyclin N-terminal domain; that stretch reads RIYCYFLIMK…LIEELQCYLI (102 aa).

Belongs to the cyclin family. Cyclin C subfamily. Component of the SRB8-11 complex, a regulatory module of the Mediator complex.

Its subcellular location is the nucleus. In terms of biological role, component of the SRB8-11 complex. The SRB8-11 complex is a regulatory module of the Mediator complex which is itself involved in regulation of basal and activated RNA polymerase II-dependent transcription. The SRB8-11 complex may be involved in the transcriptional repression of a subset of genes regulated by Mediator. It may inhibit the association of the Mediator complex with RNA polymerase II to form the holoenzyme complex. The SRB8-11 complex phosphorylates the C-terminal domain (CTD) of the largest subunit of RNA polymerase II. The protein is RNA polymerase II holoenzyme cyclin-like subunit (SSN8) of Candida glabrata (strain ATCC 2001 / BCRC 20586 / JCM 3761 / NBRC 0622 / NRRL Y-65 / CBS 138) (Yeast).